Consider the following 287-residue polypeptide: MAAKIIDGKTIAQQVKDEVAARVTQRLAEGKRAPGLAVVLVGDNPASQIYVTSKRKVCEEVGFISRSYDLPITTTESELLALIDQLNADQAIDGILVQLPLPEGIDNTKVIERIAPDKDVDGFHPYNVGRLCQRAPLLRACTPRGIITLLERYNIDTFGLNAVVVGASNIVGRPMSLELLLAGCTTTVTHRFTKNLRHHIENADLLVVAVGKPGFIPGEWIKPGAIVLDVGINRLESGKVVGDIEFETAQERASYISPVPGGVGPMTVATLIQNTLQACEEYHDHAE.

NADP(+) is bound by residues 166–168 (GAS) and Ile-232.

Belongs to the tetrahydrofolate dehydrogenase/cyclohydrolase family. Homodimer.

The enzyme catalyses (6R)-5,10-methylene-5,6,7,8-tetrahydrofolate + NADP(+) = (6R)-5,10-methenyltetrahydrofolate + NADPH. It catalyses the reaction (6R)-5,10-methenyltetrahydrofolate + H2O = (6R)-10-formyltetrahydrofolate + H(+). The protein operates within one-carbon metabolism; tetrahydrofolate interconversion. Catalyzes the oxidation of 5,10-methylenetetrahydrofolate to 5,10-methenyltetrahydrofolate and then the hydrolysis of 5,10-methenyltetrahydrofolate to 10-formyltetrahydrofolate. The polypeptide is Bifunctional protein FolD (Pectobacterium atrosepticum (strain SCRI 1043 / ATCC BAA-672) (Erwinia carotovora subsp. atroseptica)).